The following is a 287-amino-acid chain: MPLLKLVFLGTGGAVPKSDRMLPTIYLEDWLGHRVLLDAGEGAQYRLLQIDVSPASLTLVAITHQHEDHTLGLPGLVITNKFLGGKLKVLAPRSMHKILERLGVEVSDSYEEGRFKITCVEVCHTVDACGWLFQWDVGYKLDLSKVAGLPKWALTNLIRGEAVKVGGRLITPEEVADLTHKRFRRLLYTGDTAPCPQMWKTVGEVDVLIHEATFADDVEPQKAHDEGHSTVADAVEAAKTLKADVLILTHISARYPSKERHKALADAVKPPPHIYIPDDFDTLLIKL.

The Zn(2+) site is built by His64, His66, Asp68, His69, His124, Asp191, and His250. Asp68 functions as the Proton acceptor in the catalytic mechanism.

It belongs to the RNase Z family. Homodimer. Requires Zn(2+) as cofactor.

It catalyses the reaction Endonucleolytic cleavage of RNA, removing extra 3' nucleotides from tRNA precursor, generating 3' termini of tRNAs. A 3'-hydroxy group is left at the tRNA terminus and a 5'-phosphoryl group is left at the trailer molecule.. In terms of biological role, zinc phosphodiesterase, which displays some tRNA 3'-processing endonuclease activity. Probably involved in tRNA maturation, by removing a 3'-trailer from precursor tRNA. The polypeptide is Ribonuclease Z (Pyrobaculum islandicum (strain DSM 4184 / JCM 9189 / GEO3)).